The following is a 333-amino-acid chain: Isoaspartyl peptidase/L-asparaginase (333 aa).

Thr191 (nucleophile) is an active-site residue. Residues 219–222 and 242–245 each bind substrate; these read RVGD and TGHG.

The protein belongs to the Ntn-hydrolase family. As to quaternary structure, heterodimer of an alpha and beta chain produced by autocleavage. This heterodimer may then dimerize in turn, giving rise to a heterotetramer. Post-translationally, cleaved into an alpha and beta chain by autocatalysis; this activates the enzyme. The N-terminal residue of the beta subunit is responsible for the nucleophile hydrolase activity. As to expression, present in testis, brain, liver, kidney, heart and skeletal muscle. In brain, specifically present in the astrocytic lineage. Present in sperm (at protein level).

The protein localises to the cytoplasm. The catalysed reaction is L-asparagine + H2O = L-aspartate + NH4(+). It carries out the reaction Cleavage of a beta-linked Asp residue from the N-terminus of a polypeptide.. Has both L-asparaginase and beta-aspartyl peptidase activity. Is highly active with L-Asp beta-methyl ester. Besides, has catalytic activity toward beta-aspartyl dipeptides and their methyl esters, including beta-L-Asp-L-Phe, beta-L-Asp-L-Phe methyl ester (aspartame), beta-L-Asp-L-Ala, beta-L-Asp-L-Leu and beta-L-Asp-L-Lys. Does not have aspartylglucosaminidase activity and is inactive toward GlcNAc-L-Asn. Likewise, has no activity toward glutamine. May be involved in the production of L-aspartate, which can act as an excitatory neurotransmitter in some brain regions. The protein is Isoaspartyl peptidase/L-asparaginase (Asrgl1) of Rattus norvegicus (Rat).